The primary structure comprises 540 residues: ATP-dependent RNA helicase DBP3 (540 aa).

The segment covering 1–35 (MTVEESKKRKLTDDVAIKQNEKKIKKDKKVKDKKD) has biased composition (basic and acidic residues). Positions 1–89 (MTVEESKKRK…TTEQPSKQVK (89 aa)) are disordered. Basic residues predominate over residues 36 to 52 (KKDKKDKKDKKEKKEKK). Composition is skewed to basic and acidic residues over residues 53-62 (EKKEKNDKKD) and 68-79 (DKKAEQVDKLSE). Residues 130–156 (LAFNQISLDKEVQNEIAKFPKPTPIQA) carry the Q motif motif. Residues 159 to 332 (WPYLLSGKDV…STFMKEPVKV (174 aa)) enclose the Helicase ATP-binding domain. An ATP-binding site is contributed by 172–179 (AETGSGKT). Residues 279–282 (DEAD) carry the DEAD box motif. The region spanning 361–510 (KLLDLLKKYQ…PVPEDLIKFG (150 aa)) is the Helicase C-terminal domain.

Belongs to the DEAD box helicase family. DDX5/DBP2 subfamily.

The protein resides in the nucleus. It is found in the nucleolus. The enzyme catalyses ATP + H2O = ADP + phosphate + H(+). Functionally, ATP-dependent RNA helicase required for 60S ribosomal subunit synthesis. Involved in efficient pre-rRNA processing, predominantly at site A3, which is necessary for the normal formation of 25S and 5.8S rRNAs. This is ATP-dependent RNA helicase DBP3 (DBP3) from Candida glabrata (strain ATCC 2001 / BCRC 20586 / JCM 3761 / NBRC 0622 / NRRL Y-65 / CBS 138) (Yeast).